Here is a 308-residue protein sequence, read N- to C-terminus: Zinc finger protein unc-98 (308 aa).

C2H2-type zinc fingers lie at residues 111–133 and 139–161; these read YKCR…ERIH and YVCG…AAQH. A C2H2-type 3; degenerate zinc finger spans residues 166–186; sequence GFKCDCGRTFFSYTEMLYHKH. The C2H2-type 4 zinc-finger motif lies at 244-266; that stretch reads YICEYCSKSYSDSRGLAYHMYSH.

It is found in the nucleus. It localises to the cytoplasm. Probable transcription factor. Required for muscle structure. Its dual subcellular localization suggests that it may function both as a muscle adhesion complex protein and as a transcription factor, or work together with transcription factors, to influence gene expression. Thought to act as a molecular bridge between unc-97 and mhc-a at the M-line of muscles, possibly in a signaling role. The sequence is that of Zinc finger protein unc-98 from Caenorhabditis briggsae.